Reading from the N-terminus, the 490-residue chain is Ribulose bisphosphate carboxylase large chain (490 aa).

N127 and T177 together coordinate substrate. K179 serves as the catalytic Proton acceptor. K181 serves as a coordination point for substrate. Mg(2+)-binding residues include K205, D207, and E208. N6-carboxylysine is present on K205. The active-site Proton acceptor is the H297. R298, H330, and S382 together coordinate substrate.

The protein belongs to the RuBisCO large chain family. Type I subfamily. In terms of assembly, heterohexadecamer of 8 large chains and 8 small chains. The cofactor is Mg(2+).

The protein resides in the plastid. Its subcellular location is the chloroplast. The catalysed reaction is 2 (2R)-3-phosphoglycerate + 2 H(+) = D-ribulose 1,5-bisphosphate + CO2 + H2O. It catalyses the reaction D-ribulose 1,5-bisphosphate + O2 = 2-phosphoglycolate + (2R)-3-phosphoglycerate + 2 H(+). In terms of biological role, ruBisCO catalyzes two reactions: the carboxylation of D-ribulose 1,5-bisphosphate, the primary event in carbon dioxide fixation, as well as the oxidative fragmentation of the pentose substrate in the photorespiration process. Both reactions occur simultaneously and in competition at the same active site. This chain is Ribulose bisphosphate carboxylase large chain, found in Trieres chinensis (Marine centric diatom).